A 112-amino-acid chain; its full sequence is Mu-ctenitoxin-Pn1a (112 aa).

Residues 1–19 (MKLLGIFLVASFAFVLSFG) form the signal peptide. Residues 20–33 (EEMIEGENPLEDQR) constitute a propeptide that is removed on maturation. Disulfide bonds link Cys39/Cys56, Cys46/Cys62, Cys53/Cys85, Cys55/Cys73, Cys64/Cys71, Cys91/Cys106, and Cys102/Cys110. Residue Gly111 is modified to Glycine amide.

This sequence belongs to the neurotoxin 04 (omega-agtx) family. 02 (Tx1) subfamily. Post-translationally, contains 7 disulfide bonds. As to expression, expressed by the venom gland.

The protein localises to the secreted. Functionally, reversible inhibitor of neuronal sodium channels (Nav1.2/ SCN2A) that binds in proximity to site 1 and displays increasing affinity as the membrane potential is depolarized. Induces excitatory symptoms and spastic paralysis in mice. In Phoneutria nigriventer (Brazilian armed spider), this protein is Mu-ctenitoxin-Pn1a.